Consider the following 157-residue polypeptide: 2-C-methyl-D-erythritol 2,4-cyclodiphosphate synthase (157 aa).

The a divalent metal cation site is built by D8 and H10. 4-CDP-2-C-methyl-D-erythritol 2-phosphate is bound by residues 8–10 (DVH) and 34–35 (HS). Position 42 (H42) interacts with a divalent metal cation. 4-CDP-2-C-methyl-D-erythritol 2-phosphate-binding positions include 56-58 (DIG), 61-65 (FPDTD), 100-106 (AQAPKMA), 132-135 (TTTE), F139, and R142.

This sequence belongs to the IspF family. In terms of assembly, homotrimer. It depends on a divalent metal cation as a cofactor.

It catalyses the reaction 4-CDP-2-C-methyl-D-erythritol 2-phosphate = 2-C-methyl-D-erythritol 2,4-cyclic diphosphate + CMP. The protein operates within isoprenoid biosynthesis; isopentenyl diphosphate biosynthesis via DXP pathway; isopentenyl diphosphate from 1-deoxy-D-xylulose 5-phosphate: step 4/6. Functionally, involved in the biosynthesis of isopentenyl diphosphate (IPP) and dimethylallyl diphosphate (DMAPP), two major building blocks of isoprenoid compounds. Catalyzes the conversion of 4-diphosphocytidyl-2-C-methyl-D-erythritol 2-phosphate (CDP-ME2P) to 2-C-methyl-D-erythritol 2,4-cyclodiphosphate (ME-CPP) with a corresponding release of cytidine 5-monophosphate (CMP). The chain is 2-C-methyl-D-erythritol 2,4-cyclodiphosphate synthase from Pseudomonas paraeruginosa (strain DSM 24068 / PA7) (Pseudomonas aeruginosa (strain PA7)).